Here is a 386-residue protein sequence, read N- to C-terminus: Lipoyl synthase, mitochondrial (386 aa).

Residues Cys115, Cys120, Cys126, Cys146, Cys150, Cys153, and Ser362 each coordinate [4Fe-4S] cluster. The region spanning 131-351 (ETGTATATIM…QKLGMEMGFR (221 aa)) is the Radical SAM core domain.

Belongs to the radical SAM superfamily. Lipoyl synthase family. The cofactor is [4Fe-4S] cluster.

It localises to the mitochondrion. The catalysed reaction is [[Fe-S] cluster scaffold protein carrying a second [4Fe-4S](2+) cluster] + N(6)-octanoyl-L-lysyl-[protein] + 2 oxidized [2Fe-2S]-[ferredoxin] + 2 S-adenosyl-L-methionine + 4 H(+) = [[Fe-S] cluster scaffold protein] + N(6)-[(R)-dihydrolipoyl]-L-lysyl-[protein] + 4 Fe(3+) + 2 hydrogen sulfide + 2 5'-deoxyadenosine + 2 L-methionine + 2 reduced [2Fe-2S]-[ferredoxin]. Its pathway is protein modification; protein lipoylation via endogenous pathway; protein N(6)-(lipoyl)lysine from octanoyl-[acyl-carrier-protein]: step 2/2. Catalyzes the radical-mediated insertion of two sulfur atoms into the C-6 and C-8 positions of the octanoyl moiety bound to the lipoyl domains of lipoate-dependent enzymes, thereby converting the octanoylated domains into lipoylated derivatives. This is Lipoyl synthase, mitochondrial from Picea sitchensis (Sitka spruce).